Reading from the N-terminus, the 774-residue chain is Two pore channel protein 2 (774 aa).

Residues 1–92 (MEEEPLLAGS…GSLRLYRWYY (92 aa)) are Cytoplasmic-facing. A helical transmembrane segment spans residues 93-113 (SNLCQWGLGLTIAVVLALAFI). Residues 114–140 (ERPSSLTYTSDIRVKPKPWEPPCGMTE) are Extracellular-facing. Residues 141–161 (GIEIVCLCIFILDVTAKGYLI) form a helical membrane-spanning segment. Over 162–170 (GWEEFRMNK) the chain is Cytoplasmic. The helical transmembrane segment at 171-191 (WLLAYLIVITASVIDWMLSIS) threads the bilayer. Topologically, residues 192 to 197 (MLCDEN) are extracellular. A helical membrane pass occupies residues 198-218 (LRVRRLIRPFFLLQNSSLMKK). Residues 217-221 (KKTLK) are interaction with phosphatidylinositol 3,5-bisphosphate. Residues 219-232 (TLKCIKRTLPEIAS) lie on the Cytoplasmic side of the membrane. A helical transmembrane segment spans residues 233-253 (VILLLALHICLFTMIGMLIFA). At 254–267 (KSDDPKQNGEWQTY) the chain is on the extracellular side. Residues 268–292 (FRNLPKALSSLLVLLTTANNPDVMI) constitute an intramembrane region (helical; Pore-forming). Topologically, residues 293-302 (PAYSLNRGYS) are extracellular. A helical membrane pass occupies residues 303 to 323 (IFFILFSVFGTYLLMNLMTAI). Topologically, residues 324–452 (IYNQFRGYLL…YVYSHYYISV (129 aa)) are cytoplasmic. The chain crosses the membrane as a helical span at residues 453–475 (LGNAVALANVICICTVLVLNAEK). At 476-486 (SASEKNYFYME) the chain is on the extracellular side. The helical transmembrane segment at 487-507 (IINCIFILYYLIEMLLKIVAF) threads the bilayer. Residues 508–518 (GWKGYLSYRNN) are Cytoplasmic-facing. Residues 519–539 (IFDGFLTVLLLAIQIVIFITF) traverse the membrane as a helical segment. Topologically, residues 540–564 (KIPYVDVDPVPRHVMALWEMIRLVN) are extracellular. The chain crosses the membrane as a helical span at residues 565–585 (MLIVFRFLRIIPEIKLMAVVA). At 586-596 (STIVDLVKNLR) the chain is on the cytoplasmic side. The chain crosses the membrane as a helical span at residues 597 to 617 (AFAGILLVVYYMFAVLGIWLF). Topologically, residues 618–658 (QGAISPPSNMSLVSNSSLENITGPYSMECGTFEQLEYWPNN) are extracellular. Residues asparagine 626, asparagine 632, and asparagine 637 are each glycosylated (N-linked (GlcNAc...) asparagine). Positions 659-681 (FDDFASSLILLYNIMVVNNWHVF) form an intramembrane region, helical; Pore-forming. Residues 682–696 (TDAYARYTTDWSLVY) lie on the Extracellular side of the membrane. A helical membrane pass occupies residues 697-717 (FVVWWLTSSVMWVNLFVALIL). Residues 718 to 774 (ENFTYKWDRSNGLSVEDVERIAYQSTVQLMFKEHVKEPTEEELLAQLHQHPHLHLSW) are Cytoplasmic-facing.

Belongs to the calcium channel alpha-1 subunit (TC 1.A.1.11) family. Two pore calcium channel subfamily. In terms of assembly, homodimer. In terms of processing, N-glycosylated.

It localises to the late endosome membrane. The protein localises to the lysosome membrane. The catalysed reaction is Na(+)(in) = Na(+)(out). It catalyses the reaction Ca(2+)(in) = Ca(2+)(out). Functionally, intracellular channel initially characterized as a non-selective Ca(2+)-permeable channel activated by NAADP (nicotinic acid adenine dinucleotide phosphate), it is also a highly-selective Na(+) channel activated directly by PI(3,5)P2 (phosphatidylinositol 3,5-bisphosphate). Localizes to the lysosomal and late endosome membranes where it regulates organellar membrane excitability, membrane trafficking, and pH homeostasis. The polypeptide is Two pore channel protein 2 (tpcn2) (Danio rerio (Zebrafish)).